Consider the following 317-residue polypeptide: Transaldolase (317 aa).

Lysine 126 acts as the Schiff-base intermediate with substrate in catalysis.

Belongs to the transaldolase family. Type 1 subfamily. In terms of assembly, homodimer.

The protein resides in the cytoplasm. It catalyses the reaction D-sedoheptulose 7-phosphate + D-glyceraldehyde 3-phosphate = D-erythrose 4-phosphate + beta-D-fructose 6-phosphate. It functions in the pathway carbohydrate degradation; pentose phosphate pathway; D-glyceraldehyde 3-phosphate and beta-D-fructose 6-phosphate from D-ribose 5-phosphate and D-xylulose 5-phosphate (non-oxidative stage): step 2/3. Functionally, transaldolase is important for the balance of metabolites in the pentose-phosphate pathway. The sequence is that of Transaldolase from Burkholderia cenocepacia (strain ATCC BAA-245 / DSM 16553 / LMG 16656 / NCTC 13227 / J2315 / CF5610) (Burkholderia cepacia (strain J2315)).